Reading from the N-terminus, the 520-residue chain is GMP synthase [glutamine-hydrolyzing] (520 aa).

The 194-residue stretch at Lys9–Gln202 folds into the Glutamine amidotransferase type-1 domain. Cys86 functions as the Nucleophile in the catalytic mechanism. Residues His176 and Glu178 contribute to the active site. A GMPS ATP-PPase domain is found at Trp203–Arg395. ATP is bound at residue Ser230–Ser236.

As to quaternary structure, homodimer.

It catalyses the reaction XMP + L-glutamine + ATP + H2O = GMP + L-glutamate + AMP + diphosphate + 2 H(+). The protein operates within purine metabolism; GMP biosynthesis; GMP from XMP (L-Gln route): step 1/1. Functionally, catalyzes the synthesis of GMP from XMP. This chain is GMP synthase [glutamine-hydrolyzing], found in Syntrophotalea carbinolica (strain DSM 2380 / NBRC 103641 / GraBd1) (Pelobacter carbinolicus).